A 274-amino-acid chain; its full sequence is Beta-lactamase OXA-9 (274 aa).

A signal peptide spans 1 to 24; it reads MKKILLLHMLVFVSATLPISSVAS. S58 serves as the catalytic Acyl-ester intermediate. K61 is modified (N6-carboxylysine). 206–208 is a binding site for substrate; that stretch reads KSG.

The protein belongs to the class-D beta-lactamase family.

The catalysed reaction is a beta-lactam + H2O = a substituted beta-amino acid. Its function is as follows. Oxacillin-hydrolyzing beta-lactamase. Confers resistance to beta-lactam antibiotics but at a significantly lower level than the TEM bla gene product. This Klebsiella aerogenes (Enterobacter aerogenes) protein is Beta-lactamase OXA-9 (bla).